The following is a 603-amino-acid chain: MLTEYGDFKRTKYCGEVSEEDIGKEVKLAGWVHRKRHHGGVIFIDLRDREGIVQVVVEEKTNPEAYEVADKLKSEYVIGVVGKVRKRPEGTENPKLKTGYVEVVADRILVFNTSEALPFPVEEETHVSEETKLKYRYIDLRRESMKNNLIFRHRVYQITRNFFTKEGFIEIETPFLTKSTPEGARDFLVPSRLHPGKFYALPQSPQLFKQILMIAGFDRYFQIVKCFRDEDLRADRQPEFTQIDYEMSFVSEEEVMDVAERLIATLFKELLGVELKTPFERISYREAMEKYGTDKPDRRFGLELIELTDIFKNTAFKVFKSVVEAGGIIKAINFKGSNLSRKEIDELTKFVQSLGAKGLAWIKVEKDKLTSPIVKFFTEEETQKLLERTKAEPGDVILFSADKKEMVYKILGNLRLHLGKKYKLIDESKWDVFWIVDFPLMEWDEEEERFVSLHHPFTMPREENIPKLKEALEEEDLEKKKEIVHSVRARAYDMVLNGEEIGGGSIRIHRRDIQEVVFKLLGIGEVEAQEKFGFLLEALKYGAPPHGGLAFGLDRVVALMLGLDSIRDTIAFPKTQRGICPLTGAPDYVDPKQLKELHIKVLE.

Glu-182 provides a ligand contact to L-aspartate. An aspartate region spans residues 206–209 (QLFK). An L-aspartate-binding site is contributed by Arg-228. ATP contacts are provided by residues 228–230 (RDE) and Gln-237. His-454 contributes to the L-aspartate binding site. Glu-500 lines the ATP pocket. An L-aspartate-binding site is contributed by Arg-507. 552–555 (GLDR) contributes to the ATP binding site.

Belongs to the class-II aminoacyl-tRNA synthetase family. Type 1 subfamily. As to quaternary structure, homodimer.

The protein localises to the cytoplasm. It carries out the reaction tRNA(Asx) + L-aspartate + ATP = L-aspartyl-tRNA(Asx) + AMP + diphosphate. Functionally, aspartyl-tRNA synthetase with relaxed tRNA specificity since it is able to aspartylate not only its cognate tRNA(Asp) but also tRNA(Asn). Reaction proceeds in two steps: L-aspartate is first activated by ATP to form Asp-AMP and then transferred to the acceptor end of tRNA(Asp/Asn). The polypeptide is Aspartate--tRNA(Asp/Asn) ligase (Aquifex aeolicus (strain VF5)).